Reading from the N-terminus, the 482-residue chain is tRNA-2-methylthio-N(6)-dimethylallyladenosine synthase (482 aa).

An MTTase N-terminal domain is found at 3–120 (KKLHIKTWGC…LPEMIKQVQG (118 aa)). 6 residues coordinate [4Fe-4S] cluster: C12, C49, C83, C158, C162, and C165. Residues 144 to 376 (KADGPSAFVS…QNRITQMAQQ (233 aa)) form the Radical SAM core domain. Residues 379–442 (RQMFDTEQRI…PNSLRGDLIR (64 aa)) form the TRAM domain.

The protein belongs to the methylthiotransferase family. MiaB subfamily. In terms of assembly, monomer. The cofactor is [4Fe-4S] cluster.

It is found in the cytoplasm. The catalysed reaction is N(6)-dimethylallyladenosine(37) in tRNA + (sulfur carrier)-SH + AH2 + 2 S-adenosyl-L-methionine = 2-methylsulfanyl-N(6)-dimethylallyladenosine(37) in tRNA + (sulfur carrier)-H + 5'-deoxyadenosine + L-methionine + A + S-adenosyl-L-homocysteine + 2 H(+). In terms of biological role, catalyzes the methylthiolation of N6-(dimethylallyl)adenosine (i(6)A), leading to the formation of 2-methylthio-N6-(dimethylallyl)adenosine (ms(2)i(6)A) at position 37 in tRNAs that read codons beginning with uridine. The sequence is that of tRNA-2-methylthio-N(6)-dimethylallyladenosine synthase from Pseudoalteromonas translucida (strain TAC 125).